The sequence spans 262 residues: MQVDLLSSAQSAHALHLFHQHSPLVHCMTNDVVQTFTANTLLALGASPAMVIETEEASQFAAIASALLINVGTLTQPRAQAMRAAVEQAKSSQTPWTLDPVAVGALDYRRHFCHELLSFKPAAIRGNASEIMALAGIANGGRGVDTTDAAANAIPAAQTLARETGAIVVVTGEVDYVTDGHRAVGIHGGDPLMTKVVGTGCALSAVVAACCALPGDTLENVASACHWMKQAGERAVARSEGPGSFVPHFLDALWQLTQEVQA.

Substrate is bound at residue M50. Residues R125 and T171 each coordinate ATP. Residue G198 coordinates substrate.

This sequence belongs to the Thz kinase family. The cofactor is Mg(2+).

It carries out the reaction 5-(2-hydroxyethyl)-4-methylthiazole + ATP = 4-methyl-5-(2-phosphooxyethyl)-thiazole + ADP + H(+). Its pathway is cofactor biosynthesis; thiamine diphosphate biosynthesis; 4-methyl-5-(2-phosphoethyl)-thiazole from 5-(2-hydroxyethyl)-4-methylthiazole: step 1/1. Functionally, catalyzes the phosphorylation of the hydroxyl group of 4-methyl-5-beta-hydroxyethylthiazole (THZ). The sequence is that of Hydroxyethylthiazole kinase from Escherichia coli (strain 55989 / EAEC).